Consider the following 392-residue polypeptide: NADH-quinone oxidoreductase subunit D (392 aa).

The protein belongs to the complex I 49 kDa subunit family. In terms of assembly, NDH-1 is composed of 14 different subunits. Subunits NuoB, C, D, E, F, and G constitute the peripheral sector of the complex.

The protein resides in the cell inner membrane. The catalysed reaction is a quinone + NADH + 5 H(+)(in) = a quinol + NAD(+) + 4 H(+)(out). Functionally, NDH-1 shuttles electrons from NADH, via FMN and iron-sulfur (Fe-S) centers, to quinones in the respiratory chain. The immediate electron acceptor for the enzyme in this species is believed to be ubiquinone. Couples the redox reaction to proton translocation (for every two electrons transferred, four hydrogen ions are translocated across the cytoplasmic membrane), and thus conserves the redox energy in a proton gradient. The polypeptide is NADH-quinone oxidoreductase subunit D (Parvibaculum lavamentivorans (strain DS-1 / DSM 13023 / NCIMB 13966)).